The following is a 135-amino-acid chain: MRHYEIVFMVHPDQSEQVPGMIERYTAAITGAEGKIHRLEDWGRRQLAYPINKLHKAHYVLMNVEAPQEVIDELETTFRFNDAVIRSMVMRTKHAVTEASPMVKAKDERRERRDDFANETADDAEAGDSEEEEEE.

K93 carries the N6-acetyllysine modification. Positions 98–135 (EASPMVKAKDERRERRDDFANETADDAEAGDSEEEEEE) are disordered. Over residues 104–116 (KAKDERRERRDDF) the composition is skewed to basic and acidic residues. Residues 120–135 (TADDAEAGDSEEEEEE) are compositionally biased toward acidic residues.

The protein belongs to the bacterial ribosomal protein bS6 family. Part of the 30S ribosomal subunit. Interacts weakly with uL2 in one of the 3.5 A resolved structures. Post-translationally, 5 different forms of the protein, varying only in the number of C-terminal glutamate residues, were isolated. The sequence shown is form bS6-6, which is the longest. The first two Glu are encoded by the rpsF gene, the other Glu are added post-translationally by the RimK enzyme.

In terms of biological role, binds together with bS18 to 16S ribosomal RNA. This is Small ribosomal subunit protein bS6 (rpsF) from Escherichia coli (strain K12).